We begin with the raw amino-acid sequence, 432 residues long: Enolase (432 aa).

(2R)-2-phosphoglycerate is bound at residue Q163. The Proton donor role is filled by E205. Positions 242, 285, and 312 each coordinate Mg(2+). (2R)-2-phosphoglycerate is bound by residues K337, R366, S367, and K388. K337 functions as the Proton acceptor in the catalytic mechanism.

The protein belongs to the enolase family. Mg(2+) is required as a cofactor.

The protein resides in the cytoplasm. Its subcellular location is the secreted. The protein localises to the cell surface. It carries out the reaction (2R)-2-phosphoglycerate = phosphoenolpyruvate + H2O. The protein operates within carbohydrate degradation; glycolysis; pyruvate from D-glyceraldehyde 3-phosphate: step 4/5. Functionally, catalyzes the reversible conversion of 2-phosphoglycerate (2-PG) into phosphoenolpyruvate (PEP). It is essential for the degradation of carbohydrates via glycolysis. The chain is Enolase from Bifidobacterium longum (strain DJO10A).